Consider the following 545-residue polypeptide: Glucose-6-phosphate isomerase (545 aa).

Glu351 (proton donor) is an active-site residue. Residues His382 and Lys510 contribute to the active site.

This sequence belongs to the GPI family.

It is found in the cytoplasm. The catalysed reaction is alpha-D-glucose 6-phosphate = beta-D-fructose 6-phosphate. Its pathway is carbohydrate biosynthesis; gluconeogenesis. The protein operates within carbohydrate degradation; glycolysis; D-glyceraldehyde 3-phosphate and glycerone phosphate from D-glucose: step 2/4. Functionally, catalyzes the reversible isomerization of glucose-6-phosphate to fructose-6-phosphate. The protein is Glucose-6-phosphate isomerase of Shewanella pealeana (strain ATCC 700345 / ANG-SQ1).